The sequence spans 276 residues: Imidazole glycerol phosphate synthase subunit HisF (276 aa).

Catalysis depends on residues Asp11 and Asp130.

This sequence belongs to the HisA/HisF family. In terms of assembly, heterodimer of HisH and HisF.

Its subcellular location is the cytoplasm. It catalyses the reaction 5-[(5-phospho-1-deoxy-D-ribulos-1-ylimino)methylamino]-1-(5-phospho-beta-D-ribosyl)imidazole-4-carboxamide + L-glutamine = D-erythro-1-(imidazol-4-yl)glycerol 3-phosphate + 5-amino-1-(5-phospho-beta-D-ribosyl)imidazole-4-carboxamide + L-glutamate + H(+). It participates in amino-acid biosynthesis; L-histidine biosynthesis; L-histidine from 5-phospho-alpha-D-ribose 1-diphosphate: step 5/9. Its function is as follows. IGPS catalyzes the conversion of PRFAR and glutamine to IGP, AICAR and glutamate. The HisF subunit catalyzes the cyclization activity that produces IGP and AICAR from PRFAR using the ammonia provided by the HisH subunit. The protein is Imidazole glycerol phosphate synthase subunit HisF of Beijerinckia indica subsp. indica (strain ATCC 9039 / DSM 1715 / NCIMB 8712).